The chain runs to 196 residues: uncharacterized protein (196 aa).

The signal sequence occupies residues Met1–Ala21. Cys22 is lipidated: N-palmitoyl cysteine. Cys22 carries S-diacylglycerol cysteine lipidation.

It localises to the cell membrane. This is an uncharacterized protein from Treponema pallidum (strain Nichols).